A 712-amino-acid polypeptide reads, in one-letter code: MRPVSQIERTVAPFEVVSPYQPSGDQPTAIAELARRVQAGEKDVVLLGATGTGKSATTAWMIEKLQRPTLVMAPNKTLAAQLANEFRELLPNNAVEYFVSYYDYYQPEAYVPQSDTYIEKDSSINEEVERLRHSATNSLLTRRDVIVVASVSCIYGLGTPQEYVDRMVPLRVGEEHDRDELLRRFVDIQYTRNDMAFARGTFRVRGDTIEIFPVYEELAVRIEMFGDEIEALSTLHPVTGEIISEDQQLYVFPASHYVAGPERLERAVNDIEKELAERLTELEKQGKLLEAQRLRMRTTYDIEMLRQIGSCSGVENYSMHFDGRSPGSPPNTLLDYFPDDFLLVIDESHVTVPQIGAMYEGDASRKRTLVDHGFRLPSALDNRPLKWEEFQERIGQTVYLSATPGAYELSRSDGAVEQIIRPTGLVDPEVVVKPTEGQIDDLVHEIRRRTEKDERVLVTTLTKKMAEDLTDYFVELGIQVRYLHSDVDTLRRVELLRELRAGEYDVLVGINLLREGLDLPEVSLVAILDADKEGFLRSGTSLIQTIGRAARNVSGQVHMYADKITPAMEKAIDETNRRREKQVAFNKANGVDPQPLRKKINDIVAQIAREDVDTEQLLGSGYRQTKEGKGAKAPVPALGGQKTGGAKAARGRAKETAVTDRPAAELAEQIEDLTTRMRAAAADLQFEIAARLRDEVSEMKKELRQMREAGLA.

The region spanning 35–421 (RRVQAGEKDV…SDGAVEQIIR (387 aa)) is the Helicase ATP-binding domain. 48–55 (GATGTGKS) is a binding site for ATP. A Beta-hairpin motif is present at residues 101–124 (YYDYYQPEAYVPQSDTYIEKDSSI). Residues 438-604 (QIDDLVHEIR…PLRKKINDIV (167 aa)) enclose the Helicase C-terminal domain. The segment at 625-655 (TKEGKGAKAPVPALGGQKTGGAKAARGRAKE) is disordered. The UVR domain occupies 667-702 (AEQIEDLTTRMRAAAADLQFEIAARLRDEVSEMKKE).

Belongs to the UvrB family. Forms a heterotetramer with UvrA during the search for lesions. Interacts with UvrC in an incision complex.

It localises to the cytoplasm. The UvrABC repair system catalyzes the recognition and processing of DNA lesions. A damage recognition complex composed of 2 UvrA and 2 UvrB subunits scans DNA for abnormalities. Upon binding of the UvrA(2)B(2) complex to a putative damaged site, the DNA wraps around one UvrB monomer. DNA wrap is dependent on ATP binding by UvrB and probably causes local melting of the DNA helix, facilitating insertion of UvrB beta-hairpin between the DNA strands. Then UvrB probes one DNA strand for the presence of a lesion. If a lesion is found the UvrA subunits dissociate and the UvrB-DNA preincision complex is formed. This complex is subsequently bound by UvrC and the second UvrB is released. If no lesion is found, the DNA wraps around the other UvrB subunit that will check the other stand for damage. The sequence is that of UvrABC system protein B from Streptomyces coelicolor (strain ATCC BAA-471 / A3(2) / M145).